The chain runs to 43 residues: Methionine aminopeptidase (43 aa).

This sequence belongs to the peptidase M24A family. Methionine aminopeptidase type 1 subfamily. As to quaternary structure, monomer. Requires Co(2+) as cofactor. It depends on Zn(2+) as a cofactor. Mn(2+) is required as a cofactor. Fe(2+) serves as cofactor.

The enzyme catalyses Release of N-terminal amino acids, preferentially methionine, from peptides and arylamides.. Functionally, removes the N-terminal methionine from nascent proteins. The N-terminal methionine is often cleaved when the second residue in the primary sequence is small and uncharged (Met-Ala-, Cys, Gly, Pro, Ser, Thr, or Val). Requires deformylation of the N(alpha)-formylated initiator methionine before it can be hydrolyzed. This chain is Methionine aminopeptidase (map), found in Klebsiella oxytoca.